A 366-amino-acid chain; its full sequence is Homoserine O-acetyltransferase (366 aa).

The AB hydrolase-1 domain occupies 47–349; sequence NAILICHALS…SGEGHDSFLL (303 aa). Ser-153 functions as the Nucleophile in the catalytic mechanism. Arg-221 contacts substrate. Catalysis depends on residues Asp-311 and His-344. Position 345 (Asp-345) interacts with substrate.

It belongs to the AB hydrolase superfamily. MetX family. In terms of assembly, homodimer.

Its subcellular location is the cytoplasm. It carries out the reaction L-homoserine + acetyl-CoA = O-acetyl-L-homoserine + CoA. The protein operates within amino-acid biosynthesis; L-methionine biosynthesis via de novo pathway; O-acetyl-L-homoserine from L-homoserine: step 1/1. Its function is as follows. Transfers an acetyl group from acetyl-CoA to L-homoserine, forming acetyl-L-homoserine. This chain is Homoserine O-acetyltransferase, found in Leptospira interrogans serogroup Icterohaemorrhagiae serovar copenhageni (strain Fiocruz L1-130).